The primary structure comprises 171 residues: Adenine phosphoribosyltransferase (171 aa).

This sequence belongs to the purine/pyrimidine phosphoribosyltransferase family. Homodimer.

It localises to the cytoplasm. It carries out the reaction AMP + diphosphate = 5-phospho-alpha-D-ribose 1-diphosphate + adenine. Its pathway is purine metabolism; AMP biosynthesis via salvage pathway; AMP from adenine: step 1/1. Catalyzes a salvage reaction resulting in the formation of AMP, that is energically less costly than de novo synthesis. The sequence is that of Adenine phosphoribosyltransferase from Nitrosococcus oceani (strain ATCC 19707 / BCRC 17464 / JCM 30415 / NCIMB 11848 / C-107).